Here is a 966-residue protein sequence, read N- to C-terminus: Dynamin-like GTPase OPA1, mitochondrial (966 aa).

A mitochondrion-targeting transit peptide spans 1-86 (MLRAGSVVTC…GGHGYQQHRT (86 aa)). The Mitochondrial matrix portion of the chain corresponds to 87 to 95 (FWVARLAAR). The helical transmembrane segment at 96 to 112 (LLKLRYILLGSAVGGGY) threads the bilayer. Topologically, residues 113–776 (TAKKTYDEWK…SVIADMVGPD (664 aa)) are mitochondrial intermembrane. The segment at 189–217 (ESALRAPDVPPASAAMADSGDKQFKKSSD) is disordered. A compositionally biased stretch (basic and acidic residues) spans 207-217 (SGDKQFKKSSD). Positions 213–259 (KKSSDKEKVDQLQEELLRTQLKYQRMLERLEKENKELRKVVLQKDDK) form a coiled coil. A Dynamin-type G domain is found at 291–567 (QDHLPRVVVV…FWKMVRESVE (277 aa)). Residues 301-308 (GDQSAGKT) are G1 motif. GTP contacts are provided by Ser304, Gly306, Lys307, Thr308, Ser309, and Gly323. Position 308 (Thr308) interacts with Mg(2+). The segment at 327–330 (MMTR) is G2 motif. Positions 329 and 404 each coordinate Mg(2+). The segment at 404–407 (DLPG) is G3 motif. A G4 motif region spans residues 473-476 (TKVD). The GTP site is built by Lys474, Asp476, and Thr509. The tract at residues 507-510 (VVTG) is G5 motif. 2 stalk region regions span residues 595-842 (DRNE…IKDT) and 880-934 (CNDV…VQLI). The tract at residues 742 to 862 (TDKPQWDAAI…QKALLHCNLC (121 aa)) is paddle region. The stretch at 777–787 (WKQRWMSWKNR) is an intramembrane region. The Mitochondrial intermembrane portion of the chain corresponds to 788–966 (TPEQHTRNET…AFIEALHKEK (179 aa)). A disulfide bond links Cys862 and Cys880. A coiled-coil region spans residues 901-966 (RQQLTNTEVR…AFIEALHKEK (66 aa)).

Belongs to the TRAFAC class dynamin-like GTPase superfamily. Dynamin/Fzo/YdjA family. Oligomeric complex consisting of membrane-bound and soluble forms of OPA1. Post-translationally, cleaved by OMA1 or YME1L downstream of the transmembrane region in response to different signals to generate soluble forms. Cleaved by OMA1 at position S1 following stress conditions, generating the short soluble form (Dynamin-like GTPase OPA1, short form; S-OPA1).

It localises to the mitochondrion inner membrane. Its subcellular location is the mitochondrion intermembrane space. It carries out the reaction GTP + H2O = GDP + phosphate + H(+). Dynamin-related GTPase that is essential for normal mitochondrial morphology by mediating fusion of the mitochondrial inner membranes, regulating cristae morphology and maintaining respiratory chain function. Exists in two forms: the transmembrane, long form (Dynamin-like GTPase OPA1, long form; L-OPA1), which is tethered to the inner mitochondrial membrane, and the short soluble form (Dynamin-like GTPase OPA1, short form; S-OPA1), which results from proteolytic cleavage and localizes in the intermembrane space. Both forms (L-OPA1 and S-OPA1) cooperate to catalyze the fusion of the mitochondrial inner membrane. The equilibrium between L-OPA1 and S-OPA1 is essential: excess levels of S-OPA1, produced by cleavage by OMA1 following loss of mitochondrial membrane potential, lead to an impaired equilibrium between L-OPA1 and S-OPA1, inhibiting mitochondrial fusion. The balance between L-OPA1 and S-OPA1 also influences cristae shape and morphology. Its role in mitochondrial morphology is required for mitochondrial genome maintenance. Functionally, constitutes the transmembrane long form (L-OPA1) that plays a central role in mitochondrial inner membrane fusion and cristae morphology. L-OPA1 and the soluble short form (S-OPA1) form higher-order helical assemblies that coordinate the fusion of mitochondrial inner membranes. Inner membrane-anchored L-OPA1 molecules initiate membrane remodeling by recruiting soluble S-OPA1 to rapidly polymerize into a flexible cylindrical scaffold encaging the mitochondrial inner membrane. Once at the membrane surface, the formation of S-OPA1 helices induce bilayer curvature. OPA1 dimerization through the paddle region, which inserts into cardiolipin-containing membrane, promotes GTP hydrolysis and the helical assembly of a flexible OPA1 lattice on the membrane, which drives membrane curvature and mitochondrial fusion. Plays a role in the maintenance and remodeling of mitochondrial cristae, some invaginations of the mitochondrial inner membrane that provide an increase in the surface area. Probably acts by forming helical filaments at the inside of inner membrane tubes with the shape and dimensions of crista junctions. Its function is as follows. Constitutes the soluble short form (S-OPA1) generated by cleavage by OMA1, which plays a central role in mitochondrial inner membrane fusion and cristae morphology. The transmembrane long form (L-OPA1) and the S-OPA1 form higher-order helical assemblies that coordinate the fusion of mitochondrial inner membranes. Inner membrane-anchored L-OPA1 molecules initiate membrane remodeling by recruiting soluble S-OPA1 to rapidly polymerize into a flexible cylindrical scaffold encaging the mitochondrial inner membrane. Once at the membrane surface, the formation of S-OPA1 helices induce bilayer curvature. OPA1 dimerization through the paddle region, which inserts into cardiolipin-containing membrane, promotes GTP hydrolysis and the helical assembly of a flexible OPA1 lattice on the membrane, which drives membrane curvature and mitochondrial fusion. Excess levels of S-OPA1 produced by cleavage by OMA1 following stress conditions that induce loss of mitochondrial membrane potential, lead to an impaired equilibrium between L-OPA1 and S-OPA1, thereby inhibiting mitochondrial fusion. Plays a role in the maintenance and remodeling of mitochondrial cristae, some invaginations of the mitochondrial inner membrane that provide an increase in the surface area. Probably acts by forming helical filaments at the inside of inner membrane tubes with the shape and dimensions of crista junctions. The sequence is that of Dynamin-like GTPase OPA1, mitochondrial from Danio rerio (Zebrafish).